Reading from the N-terminus, the 198-residue chain is Holliday junction branch migration complex subunit RuvA (198 aa).

The tract at residues 1-64 (MYEYIKGEYM…EDFIGLYGFE (64 aa)) is domain I. The interval 65–143 (SLEELDMFKL…SDELLNCIDE (79 aa)) is domain II. The tract at residues 144-154 (FDDVTQDNSLA) is flexible linker. A domain III region spans residues 154–198 (ALSEALSALISLGYTEKEAEKVLKDVDKSESVENIIKSALVKLMG).

This sequence belongs to the RuvA family. Homotetramer. Forms an RuvA(8)-RuvB(12)-Holliday junction (HJ) complex. HJ DNA is sandwiched between 2 RuvA tetramers; dsDNA enters through RuvA and exits via RuvB. An RuvB hexamer assembles on each DNA strand where it exits the tetramer. Each RuvB hexamer is contacted by two RuvA subunits (via domain III) on 2 adjacent RuvB subunits; this complex drives branch migration. In the full resolvosome a probable DNA-RuvA(4)-RuvB(12)-RuvC(2) complex forms which resolves the HJ.

The protein resides in the cytoplasm. Functionally, the RuvA-RuvB-RuvC complex processes Holliday junction (HJ) DNA during genetic recombination and DNA repair, while the RuvA-RuvB complex plays an important role in the rescue of blocked DNA replication forks via replication fork reversal (RFR). RuvA specifically binds to HJ cruciform DNA, conferring on it an open structure. The RuvB hexamer acts as an ATP-dependent pump, pulling dsDNA into and through the RuvAB complex. HJ branch migration allows RuvC to scan DNA until it finds its consensus sequence, where it cleaves and resolves the cruciform DNA. In Clostridium botulinum (strain Alaska E43 / Type E3), this protein is Holliday junction branch migration complex subunit RuvA.